The sequence spans 475 residues: MIDLDFRKLTIEECLKLSEEEREKLPQLSLETIKRLDPHVKAFISVRENVSVEKKGKFWGIPVAIKDNILTLGMRTTCASRILENYESVFDATVVKKMKEAGFVVVGKANLDEFAMGSSTERSAFFPTRNPWDLERVPGGSSGGSAAAVSAGMVVAALGSDTGGSVRQPASLCGVVGYKPTYGLVSRYGLVAFASSLDQIGPITKTVRDAAILMEIISGRDENDATTVNRKVDFLSEIEEGVSGMKFAVPEEIYEHDIEEGVSERFEEALKLLERLGAKVERVKIPHIKYSVATYYVIAPAEASSNLARFDGVKYGLRIKEKGLREMYMKTRNVGFGEEVRRRIMIGTFTLSAAYYEAYFNKAMKVRRKISDELNEVLSQYDAILTPTSPVTAFKIGEIKDPLTYYLMDIFTIPANLAGLPAISVPFGFSNNLPVGVQVIGRRFADGKVFRIARAIEKNSPYNENGMFPLPEVKA.

Active-site charge relay system residues include Lys-66 and Ser-141. The active-site Acyl-ester intermediate is the Ser-165.

Belongs to the amidase family. GatA subfamily. Heterotrimer of A, B and C subunits.

The enzyme catalyses L-glutamyl-tRNA(Gln) + L-glutamine + ATP + H2O = L-glutaminyl-tRNA(Gln) + L-glutamate + ADP + phosphate + H(+). Its function is as follows. Allows the formation of correctly charged Gln-tRNA(Gln) through the transamidation of misacylated Glu-tRNA(Gln) in organisms which lack glutaminyl-tRNA synthetase. The reaction takes place in the presence of glutamine and ATP through an activated gamma-phospho-Glu-tRNA(Gln). The protein is Glutamyl-tRNA(Gln) amidotransferase subunit A (gatA) of Thermotoga maritima (strain ATCC 43589 / DSM 3109 / JCM 10099 / NBRC 100826 / MSB8).